Here is a 629-residue protein sequence, read N- to C-terminus: tRNA uridine 5-carboxymethylaminomethyl modification enzyme MnmG (629 aa).

FAD contacts are provided by residues 13–18 (GGGHAG), valine 125, and serine 180. 273–287 (GPRYCPSIEDKVMRF) contributes to the NAD(+) binding site. Glutamine 370 contributes to the FAD binding site.

It belongs to the MnmG family. In terms of assembly, homodimer. Heterotetramer of two MnmE and two MnmG subunits. FAD is required as a cofactor.

Its subcellular location is the cytoplasm. In terms of biological role, NAD-binding protein involved in the addition of a carboxymethylaminomethyl (cmnm) group at the wobble position (U34) of certain tRNAs, forming tRNA-cmnm(5)s(2)U34. In Salmonella paratyphi A (strain ATCC 9150 / SARB42), this protein is tRNA uridine 5-carboxymethylaminomethyl modification enzyme MnmG.